Reading from the N-terminus, the 295-residue chain is ATP synthase gamma chain (295 aa).

Belongs to the ATPase gamma chain family. As to quaternary structure, F-type ATPases have 2 components, CF(1) - the catalytic core - and CF(0) - the membrane proton channel. CF(1) has five subunits: alpha(3), beta(3), gamma(1), delta(1), epsilon(1). CF(0) has three main subunits: a, b and c.

The protein localises to the cell membrane. Functionally, produces ATP from ADP in the presence of a proton gradient across the membrane. The gamma chain is believed to be important in regulating ATPase activity and the flow of protons through the CF(0) complex. In Herpetosiphon aurantiacus (strain ATCC 23779 / DSM 785 / 114-95), this protein is ATP synthase gamma chain.